The primary structure comprises 1357 residues: DNA-directed RNA polymerase subunit beta (1357 aa).

This sequence belongs to the RNA polymerase beta chain family. In terms of assembly, the RNAP catalytic core consists of 2 alpha, 1 beta, 1 beta' and 1 omega subunit. When a sigma factor is associated with the core the holoenzyme is formed, which can initiate transcription.

The enzyme catalyses RNA(n) + a ribonucleoside 5'-triphosphate = RNA(n+1) + diphosphate. In terms of biological role, DNA-dependent RNA polymerase catalyzes the transcription of DNA into RNA using the four ribonucleoside triphosphates as substrates. The protein is DNA-directed RNA polymerase subunit beta of Pseudomonas aeruginosa (strain UCBPP-PA14).